We begin with the raw amino-acid sequence, 726 residues long: MAR-binding filament-like protein 1 (726 aa).

Residues Met-1–Cys-41 constitute a chloroplast transit peptide. The N-terminal 54 residues, Ser-42 to Ala-95, are a transit peptide targeting the thylakoid. The Lumenal, thylakoid portion of the chain corresponds to Asp-96–Pro-124. Residues Phe-125 to Ala-145 form a helical membrane-spanning segment. Positions Tyr-144–Gln-691 form a coiled coil. Residues Leu-146–Ser-726 lie on the Stromal side of the membrane. The disordered stretch occupies residues Leu-678–Ser-726. The span at Gln-691–Thr-701 shows a compositional bias: polar residues. A Nuclear localization signal motif is present at residues Lys-715–Ser-722. Basic residues predominate over residues Lys-715 to Ser-726.

As to quaternary structure, interacts with PTST2; the interaction is essential for the initiation of starch granules biosynthesis in leaf chloroplasts, for the correct location of the process in the stromal spaces between the thylakoid membranes, and for the association of PTST2 with the thylakoid membranes. Predicted to be translocated into the thylakoid by the Tat system. The position of the transit peptide cleavages have not been experimentally proven.

It localises to the plastid. The protein resides in the chloroplast. The protein localises to the chloroplast thylakoid membrane. Its subcellular location is the chloroplast stroma. It is found in the chloroplast nucleoid. It localises to the nucleus. The protein resides in the nucleus matrix. Functionally, DNA-binding protein required for the initiation of starch granules biosynthesis in leaf chloroplasts. Anchored to the thylakoid membranes with its C-terminus facing into the stroma where it is essential for localizing PTST2 and SS4 to the stromal spaces between the thylakoid membranes in order to begin starch granule formation. Associated with leaf chloroplastic nucleoids in vivo. Binds to various chloroplastic double-stranded DNA fragments without particular sequence specificity in vitro. May function at the interface between nucleoids and thylakoids possibly by anchoring nucleoids to the thylakoid membrane system in mature chloroplasts. Likely to participate in nuclear architecture by connecting chromatin with the nuclear matrix and potentially with the nuclear envelope. This chain is MAR-binding filament-like protein 1, found in Arabidopsis thaliana (Mouse-ear cress).